Here is a 601-residue protein sequence, read N- to C-terminus: DNA ligase (601 aa).

Residue aspartate 258 coordinates ATP. Lysine 260 functions as the N6-AMP-lysine intermediate in the catalytic mechanism. ATP-binding residues include arginine 265, arginine 280, glutamate 310, phenylalanine 350, arginine 427, and lysine 433. A disordered region spans residues 568–601 (DKSPEDATTTDEILEMYNKQPKKKIESPPIDESV).

Belongs to the ATP-dependent DNA ligase family. The cofactor is Mg(2+).

It catalyses the reaction ATP + (deoxyribonucleotide)n-3'-hydroxyl + 5'-phospho-(deoxyribonucleotide)m = (deoxyribonucleotide)n+m + AMP + diphosphate.. Functionally, DNA ligase that seals nicks in double-stranded DNA during DNA replication, DNA recombination and DNA repair. The chain is DNA ligase from Saccharolobus islandicus (strain L.S.2.15 / Lassen #1) (Sulfolobus islandicus).